The sequence spans 88 residues: PTS system cellobiose-specific EIIB component (88 aa).

Positions 3 to 88 constitute a PTS EIIB type-3 domain; it reads KKRIYLFCSA…IDTLLYGKVD (86 aa). The active-site Phosphocysteine intermediate is the Cys-10. Cys-10 carries the phosphocysteine; by EIIA modification.

Its subcellular location is the cytoplasm. The enzyme catalyses D-cellobiose(out) + N(pros)-phospho-L-histidyl-[protein] = 6-phospho-beta-D-glucosyl-(1-&gt;4)-D-glucose(in) + L-histidyl-[protein]. In terms of biological role, the phosphoenolpyruvate-dependent sugar phosphotransferase system (sugar PTS), a major carbohydrate active transport system, catalyzes the phosphorylation of incoming sugar substrates concomitantly with their translocation across the cell membrane. The enzyme II CelABD PTS system is involved in cellobiose transport. The sequence is that of PTS system cellobiose-specific EIIB component from Aeromonas hydrophila.